The following is a 233-amino-acid chain: LOB domain-containing protein 40 (233 aa).

The LOB domain maps to 3–109 (MSCNGCRVLR…VEAVMRGSPV (107 aa)). A compositionally biased stretch (basic and acidic residues) spans 143-160 (KRRSRGACKEERNVRSLS). The tract at residues 143–183 (KRRSRGACKEERNVRSLSHESSLSHESPVSSEETTTEEPKT) is disordered. The segment covering 161-175 (HESSLSHESPVSSEE) has biased composition (low complexity).

It belongs to the LOB domain-containing protein family. Expressed in roots and flowers.

The protein is LOB domain-containing protein 40 (LBD40) of Arabidopsis thaliana (Mouse-ear cress).